The sequence spans 1462 residues: Gag-Pro-Pol polyprotein (1462 aa).

Residue G2 is the site of N-myristoyl glycine; by host attachment. Positions 93 to 144 (QIPSRPAPPPPSSPTHDPPDSDPQIPPPYVEPTAPQVLPVMHPHGAPPNHRP) are disordered. At S105 the chain carries Phosphoserine; by host MAPK1. The PPXY motif signature appears at 118 to 121 (PPPY). The PTAP/PSAP motif signature appears at 124–127 (PTAP). CCHC-type zinc fingers lie at residues 355–372 (QPCF…DCTQ) and 378–395 (GPCP…DCPR). The Peptidase A2 domain occupies 476–554 (IEALLDTGAD…NNWAIIGRDA (79 aa)). Catalysis depends on D481, which acts as the For protease activity; shared with dimeric partner. Residues 614–804 (LEAGHIEPYT…GTIKFLGQII (191 aa)) form the Reverse transcriptase domain. Residues D680, D755, D756, D1040, E1074, D1096, D1157, D1230, and D1287 each coordinate Mg(2+). The RNase H type-1 domain occupies 1031–1165 (INTAPCLFSD…TDALLITPVL (135 aa)). The 170-residue stretch at 1219-1388 (RGLLPNHIWQ…QPIPETRSLS (170 aa)) folds into the Integrase catalytic domain. The segment at residues 1393-1443 (HWYYFKLPGLNSRQWKGPQEALQEAAGAALIPVSASSAQWIPWRLLKRAAC) is a DNA-binding region (integrase-type).

As to quaternary structure, homodimer; the homodimers are part of the immature particles. Interacts with human TSG101 and NEDD4; these interactions are essential for budding and release of viral particles. In terms of assembly, homodimer; further assembles as homohexamers. It depends on Mg(2+) as a cofactor. Post-translationally, phosphorylation of the matrix protein p19 by MAPK1 seems to play a role in budding. Myristoylated. Myristoylation of the matrix (MA) domain mediates the transport and binding of Gag polyproteins to the host plasma membrane and is required for the assembly of viral particles. In terms of processing, specific enzymatic cleavages by the viral protease yield mature proteins. The polyprotein is cleaved during and after budding, this process is termed maturation. The protease is autoproteolytically processed at its N- and C-termini.

It localises to the virion. The enzyme catalyses Endonucleolytic cleavage to 5'-phosphomonoester.. It catalyses the reaction DNA(n) + a 2'-deoxyribonucleoside 5'-triphosphate = DNA(n+1) + diphosphate. In terms of biological role, the matrix domain targets Gag, Gag-Pro and Gag-Pro-Pol polyproteins to the plasma membrane via a multipartite membrane binding signal, that includes its myristoylated N-terminus. Functionally, matrix protein. Forms the spherical core of the virus that encapsulates the genomic RNA-nucleocapsid complex. Its function is as follows. Binds strongly to viral nucleic acids and promote their aggregation. Also destabilizes the nucleic acids duplexes via highly structured zinc-binding motifs. In terms of biological role, the aspartyl protease mediates proteolytic cleavages of Gag and Gag-Pol polyproteins during or shortly after the release of the virion from the plasma membrane. Cleavages take place as an ordered, step-wise cascade to yield mature proteins. This process is called maturation. Displays maximal activity during the budding process just prior to particle release from the cell. Cleaves the translation initiation factor eIF4G leading to the inhibition of host cap-dependent translation. Functionally, RT is a multifunctional enzyme that converts the viral RNA genome into dsDNA in the cytoplasm, shortly after virus entry into the cell. This enzyme displays a DNA polymerase activity that can copy either DNA or RNA templates, and a ribonuclease H (RNase H) activity that cleaves the RNA strand of RNA-DNA heteroduplexes in a partially processive 3' to 5'-endonucleasic mode. Conversion of viral genomic RNA into dsDNA requires many steps. A tRNA-Pro binds to the primer-binding site (PBS) situated at the 5'-end of the viral RNA. RT uses the 3' end of the tRNA primer to perform a short round of RNA-dependent minus-strand DNA synthesis. The reading proceeds through the U5 region and ends after the repeated (R) region which is present at both ends of viral RNA. The portion of the RNA-DNA heteroduplex is digested by the RNase H, resulting in a ssDNA product attached to the tRNA primer. This ssDNA/tRNA hybridizes with the identical R region situated at the 3' end of viral RNA. This template exchange, known as minus-strand DNA strong stop transfer, can be either intra- or intermolecular. RT uses the 3' end of this newly synthesized short ssDNA to perform the RNA-dependent minus-strand DNA synthesis of the whole template. RNase H digests the RNA template except for a polypurine tract (PPT) situated at the 5' end of the genome. It is not clear if both polymerase and RNase H activities are simultaneous. RNase H probably can proceed both in a polymerase-dependent (RNA cut into small fragments by the same RT performing DNA synthesis) and a polymerase-independent mode (cleavage of remaining RNA fragments by free RTs). Secondly, RT performs DNA-directed plus-strand DNA synthesis using the PPT that has not been removed by RNase H as primer. PPT and tRNA primers are then removed by RNase H. The 3' and 5' ssDNA PBS regions hybridize to form a circular dsDNA intermediate. Strand displacement synthesis by RT to the PBS and PPT ends produces a blunt ended, linear dsDNA copy of the viral genome that includes long terminal repeats (LTRs) at both ends. Catalyzes viral DNA integration into the host chromosome, by performing a series of DNA cutting and joining reactions. In Homo sapiens (Human), this protein is Gag-Pro-Pol polyprotein (gag-pro-pol).